The chain runs to 580 residues: Methyl-CpG-binding domain protein 4 (580 aa).

Positions 1–36 (MGTTGLESLSLGDRGAAPTVTSSERLVPDPPNDLRK) are disordered. Residues 76-148 (ATAGTECRKS…EDFDFTVLSK (73 aa)) form the MBD domain. Residues S318 and S428 each carry the phosphoserine modification. D560 is an active-site residue.

As to quaternary structure, interacts with MLH1.

It is found in the nucleus. Its function is as follows. Mismatch-specific DNA N-glycosylase involved in DNA repair. Has thymine glycosylase activity and is specific for G:T mismatches within methylated and unmethylated CpG sites. Can also remove uracil or 5-fluorouracil in G:U mismatches. Has no lyase activity. Was first identified as methyl-CpG-binding protein. This Homo sapiens (Human) protein is Methyl-CpG-binding domain protein 4.